The primary structure comprises 339 residues: DNA-directed RNA polymerase subunit alpha (339 aa).

The tract at residues 1–233 (MVREEVAGST…DLFLPFLHAE (233 aa)) is alpha N-terminal domain (alpha-NTD). The interval 264 to 339 (KKGIPLNCIF…IDLLKNKLSF (76 aa)) is alpha C-terminal domain (alpha-CTD).

The protein belongs to the RNA polymerase alpha chain family. As to quaternary structure, in plastids the minimal PEP RNA polymerase catalytic core is composed of four subunits: alpha, beta, beta', and beta''. When a (nuclear-encoded) sigma factor is associated with the core the holoenzyme is formed, which can initiate transcription.

Its subcellular location is the plastid. The protein resides in the chloroplast. The catalysed reaction is RNA(n) + a ribonucleoside 5'-triphosphate = RNA(n+1) + diphosphate. In terms of biological role, DNA-dependent RNA polymerase catalyzes the transcription of DNA into RNA using the four ribonucleoside triphosphates as substrates. This chain is DNA-directed RNA polymerase subunit alpha, found in Heteranthelium piliferum (Elymus pilifer).